The following is a 334-amino-acid chain: Fructose-1,6-bisphosphatase class 1 (334 aa).

Residues E93, D117, L119, and D120 each coordinate Mg(2+). Substrate contacts are provided by residues 120-123, N213, Y244, and K274; that span reads DGSS. Position 280 (E280) interacts with Mg(2+).

The protein belongs to the FBPase class 1 family. In terms of assembly, homotetramer. Mg(2+) is required as a cofactor.

Its subcellular location is the cytoplasm. It catalyses the reaction beta-D-fructose 1,6-bisphosphate + H2O = beta-D-fructose 6-phosphate + phosphate. It participates in carbohydrate biosynthesis; gluconeogenesis. This chain is Fructose-1,6-bisphosphatase class 1, found in Flavobacterium johnsoniae (strain ATCC 17061 / DSM 2064 / JCM 8514 / BCRC 14874 / CCUG 350202 / NBRC 14942 / NCIMB 11054 / UW101) (Cytophaga johnsonae).